Reading from the N-terminus, the 2476-residue chain is Transcriptional regulator ATRX (2476 aa).

Lysine 10 is covalently cross-linked (Glycyl lysine isopeptide (Lys-Gly) (interchain with G-Cter in SUMO2)). The segment at 24–154 (HSSEESEETC…FRSRSKMKAD (131 aa)) is disordered. A phosphoserine mark is found at serine 25 and serine 34. The span at 40–57 (MNQSTDKICGSGLNSDMM) shows a compositional bias: polar residues. Residues 58 to 72 (ENNKEEGASTSEKSR) show a composition bias toward basic and acidic residues. Tyrosine 89 is modified (phosphotyrosine). Position 92 is a phosphoserine (serine 92). The segment covering 98–107 (TDENVNEKAA) has biased composition (basic and acidic residues). Positions 108-121 (TENSENDITMQSLP) are enriched in polar residues. Serine 111 bears the Phosphoserine mark. Positions 134–154 (NEDKDDFKGPEFRSRSKMKAD) are enriched in basic and acidic residues. Residues lysine 137 and lysine 141 each participate in a glycyl lysine isopeptide (Lys-Gly) (interchain with G-Cter in SUMO2) cross-link. Positions 158–295 (KRGEDGLHGI…LEQLLQQNKK (138 aa)) constitute an ADD domain. A GATA-type; atypical zinc finger spans residues 169–205 (SCTACGQQVNHFQKDSIYRHPSLKVLICKNCFKYYMS). Serine 212 is subject to Phosphoserine. The segment at 216–271 (DEQCRWCAEGGNLICCDFCHNAFCKKCILRNLGRKELSTIMDENNQWYCYICQPEP) adopts a PHD-type; atypical zinc-finger fold. A Glycyl lysine isopeptide (Lys-Gly) (interchain with G-Cter in SUMO2) cross-link involves residue lysine 298. Position 315 is a phosphoserine (serine 315). 3 disordered regions span residues 427-451 (EKNTKDLKSTDAKSETKLGKGEKSY), 466-507 (SVKA…DLDM), and 525-568 (ESAM…NIKS). Lysine 439 participates in a covalent cross-link: Glycyl lysine isopeptide (Lys-Gly) (interchain with G-Cter in SUMO2). Over residues 466-494 (SVKAIDGEEQRAHKSTSGEHKGSGRKDGS) the composition is skewed to basic and acidic residues. Over residues 549–559 (ESSSVKLNVSS) the composition is skewed to polar residues. A PxVxL motif motif is present at residues 573–586 (KVRKELFVKLTPVS). A Phosphothreonine modification is found at threonine 583. Disordered stretches follow at residues 585–877 (VSLS…GGSI) and 893–1464 (PGVS…GRKK). Serine 586, serine 590, serine 626, serine 663, serine 665, serine 717, and serine 719 each carry phosphoserine. Over residues 615–630 (SSEKCRPREEISDHEN) the composition is skewed to basic and acidic residues. Residues 732 to 746 (MGHSSSSDTDINEPQ) show a composition bias toward polar residues. A phosphoserine mark is found at serine 766, serine 801, serine 828, serine 829, serine 854, serine 855, and serine 871. Over residues 819–849 (SVPEKKEEDSSEDEKQGKKVVDNGGHERAKT) the composition is skewed to basic and acidic residues. The span at 899-922 (GAEKPSVKEENVNSPEDKRVSKTK) shows a compositional bias: basic and acidic residues. Residues 923–937 (EKTKHLRSRQSRKGK) show a composition bias toward basic residues. Phosphoserine occurs at positions 941 and 953. The segment covering 943–963 (GTDRFPKKEQSDESSEGEKKQ) has biased composition (basic and acidic residues). Positions 964–973 (SRQRPGTKGK) are enriched in basic residues. Over residues 974 to 988 (KAPDLKGETLKREQE) the composition is skewed to basic and acidic residues. Lysine 984 participates in a covalent cross-link: Glycyl lysine isopeptide (Lys-Gly) (interchain with G-Cter in SUMO2). 4 positions are modified to phosphoserine: serine 991, serine 992, serine 993, and serine 1041. Basic and acidic residues predominate over residues 1031–1061 (DKSCEKKEELSDSVDKLPGKGDSCDSSEDKK). Basic residues predominate over residues 1062–1074 (TRNRVSLREKKRF). Arginine 1063 is modified (citrulline). 2 stretches are compositionally biased toward basic and acidic residues: residues 1083–1096 (KRPECSSSDTEKSL) and 1103–1129 (STEKRPKRIDLRERRNSSSKRNTKEVK). The span at 1146–1175 (KQKKQRTSAKKKTGNTKEKKRNSLRATPKR) shows a compositional bias: basic residues. The tract at residues 1169–1313 (LRATPKRKQV…VNQVNSESDS (145 aa)) is interaction with DAXX. Phosphoserine is present on residues serine 1223, serine 1224, and serine 1232. Positions 1246–1260 (PENRIAKKMLLEEIK) are enriched in basic and acidic residues. A compositionally biased stretch (acidic residues) spans 1265-1276 (SDEDGSSDDEPD). 3 positions are modified to phosphoserine: serine 1309, serine 1311, and serine 1313. The segment covering 1321-1332 (PRYRHRLLRHKL) has biased composition (basic residues). Serine 1335 and serine 1339 each carry phosphoserine. Composition is skewed to basic and acidic residues over residues 1340–1355 (GEEKPTKPKEHKEAKG) and 1395–1404 (KKAELEENQR). Residues 1406–1415 (YKQKKKRRRI) are compositionally biased toward basic residues. Over residues 1416–1436 (KVQEDSSSENKSHSEEDKKEG) the composition is skewed to basic and acidic residues. Residues 1437-1453 (DEEDEEDEDEDEEDEND) are compositionally biased toward acidic residues. Lysine 1473 participates in a covalent cross-link: Glycyl lysine isopeptide (Lys-Gly) (interchain with G-Cter in SUMO2). Serine 1512 carries the post-translational modification Phosphoserine. Residue threonine 1514 is modified to Phosphothreonine. Positions 1566–1753 (KTKKSPGSGC…HCMVNFIKEN (188 aa)) constitute a Helicase ATP-binding domain. Residue 1579-1586 (HCMGLGKT) participates in ATP binding. A DEGH box motif is present at residues 1704–1707 (DEGH). Residues serine 1891 and serine 1898 each carry the phosphoserine modification. Positions 1898–1982 (SDSDETSKSL…STSNPSSPAP (85 aa)) are disordered. Residues 1902–1913 (ETSKSLSSDEKK) are compositionally biased toward basic and acidic residues. Residue lysine 1965 forms a Glycyl lysine isopeptide (Lys-Gly) (interchain with G-Cter in SUMO1); alternate linkage. A Glycyl lysine isopeptide (Lys-Gly) (interchain with G-Cter in SUMO2); alternate cross-link involves residue lysine 1965. Residue lysine 1970 forms a Glycyl lysine isopeptide (Lys-Gly) (interchain with G-Cter in SUMO2) linkage. Low complexity predominate over residues 1971 to 1982 (TTSTSNPSSPAP). Residues serine 1975 and serine 1979 each carry the phosphoserine modification. The tract at residues 1993–2263 (DAEVLEHSGK…RKAAWAEYEA (271 aa)) is interaction with MECP2. One can recognise a Helicase C-terminal domain in the interval 2008-2188 (EILRMAEEIG…ERHFTMNELT (181 aa)). Residue serine 2203 is modified to Phosphoserine. Residues 2445 to 2476 (SVAGGMQPPPLQRAPPPTVRSKNPGPSPGKSM) form a disordered region. Residues 2451-2462 (QPPPLQRAPPPT) show a composition bias toward pro residues. Omega-N-methylarginine is present on residues arginine 2457 and arginine 2464.

It belongs to the SNF2/RAD54 helicase family. In terms of assembly, interacts with DAXX to form the chromatin remodeling complex ATRX:DAXX. Probably binds EZH2. Binds annexin V in a calcium and phosphatidylcholine/phosphatidylserine-dependent manner. Interacts directly with CBX5 via the PxVxL motif. Interacts with RAD50, MRE11 and NBN; indicative for an association with the MRN complex. Interacts with histone MACROH2A1. Interacts with histone H3 peptides methylated at 'Lys-10' with preferences H3K9me3 &gt; H3K9me2 &gt; H3K9me1. Interacts with histone H3 peptides unmethylated at 'Lys-5' (H3K4me0). Interacts with MECP2, SMC1 and SMC3. Interacts with SETDB1, TRIM28 and ZNF274. Citrullinated by PADI4.

It localises to the nucleus. It is found in the chromosome. Its subcellular location is the telomere. The protein resides in the PML body. The catalysed reaction is ATP + H2O = ADP + phosphate + H(+). In terms of biological role, involved in transcriptional regulation and chromatin remodeling. Facilitates DNA replication in multiple cellular environments and is required for efficient replication of a subset of genomic loci. Binds to DNA tandem repeat sequences in both telomeres and euchromatin and in vitro binds DNA quadruplex structures. May help stabilizing G-rich regions into regular chromatin structures by remodeling G4 DNA and incorporating H3.3-containing nucleosomes. Catalytic component of the chromatin remodeling complex ATRX:DAXX which has ATP-dependent DNA translocase activity and catalyzes the replication-independent deposition of histone H3.3 in pericentric DNA repeats outside S-phase and telomeres, and the in vitro remodeling of H3.3-containing nucleosomes. Its heterochromatin targeting is proposed to involve a combinatorial readout of histone H3 modifications (specifically methylation states of H3K9 and H3K4) and association with CBX5. Involved in maintaining telomere structural integrity in embryonic stem cells probably implying recruitment of CBX5 to telomeres. Reports on the involvement in transcriptional regulation of telomeric repeat-containing RNA (TERRA) are conflicting; according is required for its transcriptional repression in embryonic stem cells. Acts as a negative regulator of chromatin incorporation of transcriptionally repressive histone MACROH2A1, particularily at telomeres. Participates in the allele-specific gene expression at the imprinted IGF2/H19 gene locus. On the maternal allele, required for the chromatin occupancy of SMC1 and CTCTF within the H19 imprinting control region (ICR) and involved in esatblishment of histone tails modifications in the ICR. Binds to zinc-finger coding genes with atypical chromatin signatures and regulates its H3K9me3 levels. Forms a complex with ZNF274, TRIM28 and SETDB1 to facilitate the deposition and maintenance of H3K9me3 at the 3' exons of zinc-finger genes. This is Transcriptional regulator ATRX (Atrx) from Mus musculus (Mouse).